The chain runs to 353 residues: F-box protein At3g58530 (353 aa).

The F-box; degenerate domain maps to 8–56; the sequence is EEEEETWRREIVTSVMRLVSTRLPQTDLISLLLVSPWLYRTLISYPSIW.

This chain is F-box protein At3g58530, found in Arabidopsis thaliana (Mouse-ear cress).